An 851-amino-acid polypeptide reads, in one-letter code: UPF0508 protein CAGL0M08074g (851 aa).

This sequence belongs to the UPF0508 family.

This chain is UPF0508 protein CAGL0M08074g, found in Candida glabrata (strain ATCC 2001 / BCRC 20586 / JCM 3761 / NBRC 0622 / NRRL Y-65 / CBS 138) (Yeast).